The chain runs to 342 residues: Ribosomal RNA small subunit methyltransferase C (342 aa).

The protein belongs to the methyltransferase superfamily. RsmC family. In terms of assembly, monomer.

Its subcellular location is the cytoplasm. It carries out the reaction guanosine(1207) in 16S rRNA + S-adenosyl-L-methionine = N(2)-methylguanosine(1207) in 16S rRNA + S-adenosyl-L-homocysteine + H(+). In terms of biological role, specifically methylates the guanine in position 1207 of 16S rRNA in the 30S particle. In Cronobacter sakazakii (strain ATCC BAA-894) (Enterobacter sakazakii), this protein is Ribosomal RNA small subunit methyltransferase C.